The chain runs to 434 residues: ATP-dependent protease ATPase subunit HslU (434 aa).

ATP is bound by residues I18, 60-65, D247, E312, and R384; that span reads GVGKTE.

Belongs to the ClpX chaperone family. HslU subfamily. A double ring-shaped homohexamer of HslV is capped on each side by a ring-shaped HslU homohexamer. The assembly of the HslU/HslV complex is dependent on binding of ATP.

The protein localises to the cytoplasm. ATPase subunit of a proteasome-like degradation complex; this subunit has chaperone activity. The binding of ATP and its subsequent hydrolysis by HslU are essential for unfolding of protein substrates subsequently hydrolyzed by HslV. HslU recognizes the N-terminal part of its protein substrates and unfolds these before they are guided to HslV for hydrolysis. In Brucella ovis (strain ATCC 25840 / 63/290 / NCTC 10512), this protein is ATP-dependent protease ATPase subunit HslU.